We begin with the raw amino-acid sequence, 267 residues long: NH(3)-dependent NAD(+) synthetase (267 aa).

ATP is bound at residue 38 to 45 (GISGGVDS). Asp44 is a Mg(2+) binding site. Deamido-NAD(+) is bound at residue Arg123. Thr143 is an ATP binding site. Mg(2+) is bound at residue Glu148. Positions 156 and 163 each coordinate deamido-NAD(+). Residues Lys172 and Ser193 each contribute to the ATP site. 250–251 (HK) provides a ligand contact to deamido-NAD(+).

The protein belongs to the NAD synthetase family. Homodimer.

The enzyme catalyses deamido-NAD(+) + NH4(+) + ATP = AMP + diphosphate + NAD(+) + H(+). The protein operates within cofactor biosynthesis; NAD(+) biosynthesis; NAD(+) from deamido-NAD(+) (ammonia route): step 1/1. Catalyzes the ATP-dependent amidation of deamido-NAD to form NAD. Uses ammonia as a nitrogen source. In Pyrobaculum aerophilum (strain ATCC 51768 / DSM 7523 / JCM 9630 / CIP 104966 / NBRC 100827 / IM2), this protein is NH(3)-dependent NAD(+) synthetase.